A 151-amino-acid chain; its full sequence is NPC intracellular cholesterol transporter 2 (151 aa).

The N-terminal stretch at 1–19 (MRFLAATFLLLALSTAAQA) is a signal peptide. Cystine bridges form between cysteine 27–cysteine 140, cysteine 42–cysteine 47, and cysteine 93–cysteine 99. An N-linked (GlcNAc...) asparagine glycan is attached at asparagine 58. The residue at position 116 (lysine 116) is an N6-acetyllysine. Asparagine 135 is a glycosylation site (N-linked (GlcNAc...) asparagine).

This sequence belongs to the NPC2 family. In terms of assembly, interacts with NPC1 (via the second lumenal domain) in a cholestrol-dependent manner. Interacts with NUS1/NgBR, the interaction stabilizes NCP2 and regulates cholesterol trafficking. Interacts with DHDDS. Interacts with NEDD4L (via C2 domain). Interacts with NPC1L1. Detected in gallbladder bile. Detected in fibroblasts, kidney, liver, spleen, small intestine, placenta and testis (at protein level). Epididymis.

Its subcellular location is the secreted. The protein localises to the endoplasmic reticulum. It localises to the lysosome. It carries out the reaction cholesterol(in) = cholesterol(out). Intracellular cholesterol transporter which acts in concert with NPC1 and plays an important role in the egress of cholesterol from the lysosomal compartment. Unesterified cholesterol that has been released from LDLs in the lumen of the late endosomes/lysosomes is transferred by NPC2 to the cholesterol-binding pocket in the N-terminal domain of NPC1. May bind and mobilize cholesterol that is associated with membranes. NPC2 binds cholesterol with a 1:1 stoichiometry. Can bind a variety of sterols, including lathosterol, desmosterol and the plant sterols stigmasterol and beta-sitosterol. The secreted form of NCP2 regulates biliary cholesterol secretion via stimulation of ABCG5/ABCG8-mediated cholesterol transport. This chain is NPC intracellular cholesterol transporter 2, found in Homo sapiens (Human).